Reading from the N-terminus, the 264-residue chain is Thymidylate synthase (264 aa).

Position 21 (R21) interacts with dUMP. H51 contributes to the (6R)-5,10-methylene-5,6,7,8-tetrahydrofolate binding site. 126-127 (RR) lines the dUMP pocket. C146 (nucleophile) is an active-site residue. DUMP contacts are provided by residues 166 to 169 (RSCD), N177, and 207 to 209 (HLY). D169 contributes to the (6R)-5,10-methylene-5,6,7,8-tetrahydrofolate binding site. A263 contacts (6R)-5,10-methylene-5,6,7,8-tetrahydrofolate.

The protein belongs to the thymidylate synthase family. Bacterial-type ThyA subfamily. Homodimer.

It localises to the cytoplasm. The catalysed reaction is dUMP + (6R)-5,10-methylene-5,6,7,8-tetrahydrofolate = 7,8-dihydrofolate + dTMP. The protein operates within pyrimidine metabolism; dTTP biosynthesis. In terms of biological role, catalyzes the reductive methylation of 2'-deoxyuridine-5'-monophosphate (dUMP) to 2'-deoxythymidine-5'-monophosphate (dTMP) while utilizing 5,10-methylenetetrahydrofolate (mTHF) as the methyl donor and reductant in the reaction, yielding dihydrofolate (DHF) as a by-product. This enzymatic reaction provides an intracellular de novo source of dTMP, an essential precursor for DNA biosynthesis. This chain is Thymidylate synthase, found in Edwardsiella ictaluri (strain 93-146).